The sequence spans 469 residues: Crinkler effector protein 1 (469 aa).

Residues Met1–Ala17 form the signal peptide. Positions Phe18–Pro57 are LQLFLAK-like domain. Residues Ile58–Ile96 form a DWL domain region. N-linked (GlcNAc...) asparagine glycosylation occurs at Asn68. The HVLVXXP motif signature appears at His97–Pro103. Residues Asn126, Asn181, and Asn248 are each glycosylated (N-linked (GlcNAc...) asparagine).

It belongs to the Crinkler effector family. Homodimer.

It localises to the secreted. Its subcellular location is the host nucleus. In terms of biological role, effector that participates in the arbuscule development step of the symbiosis. Arbuscular mycorrhizal (AM) symbiosis is one of the most prominent and beneficial plant-microbe interactions that facilitates mineral nutrition and confers tolerance to biotic and abiotic stresses. Is not involved in cell death processes. This is Crinkler effector protein 1 from Rhizophagus irregularis (strain DAOM 181602 / DAOM 197198 / MUCL 43194) (Arbuscular mycorrhizal fungus).